Reading from the N-terminus, the 393-residue chain is Acetyl-CoA acetyltransferase (393 aa).

Cysteine 88 serves as the catalytic Acyl-thioester intermediate. Active-site proton acceptor residues include histidine 349 and cysteine 379.

The protein belongs to the thiolase-like superfamily. Thiolase family. As to quaternary structure, homotetramer.

Its subcellular location is the cytoplasm. It carries out the reaction 2 acetyl-CoA = acetoacetyl-CoA + CoA. It participates in biopolymer metabolism; poly-(R)-3-hydroxybutanoate biosynthesis. With respect to regulation, the condensation reaction is inhibited by free CoA. The cleavage reaction is characterized by substrate inhibition by acetoacetyl-CoA, which is partially relieved by free CoA. In terms of biological role, catalyzes the condensation of two acetyl-coA units to form acetoacetyl-CoA. Is involved in the biosynthesis of polyhydroxybutyrate (PHB), which is accumulated as an intracellular energy reserve material when cells grow under conditions of nutrient limitation. Also catalyzes the reverse reaction, i.e. the cleavage of acetoacetyl-CoA, and is therefore also involved in the reutilization of PHB. The chain is Acetyl-CoA acetyltransferase from Cupriavidus necator (strain ATCC 17699 / DSM 428 / KCTC 22496 / NCIMB 10442 / H16 / Stanier 337) (Ralstonia eutropha).